The following is a 492-amino-acid chain: Putative transporter SVOPL (492 aa).

The next 10 helical transmembrane spans lie at isoleucine 48–isoleucine 68, valine 86–leucine 106, phenylalanine 121–valine 141, valine 179–isoleucine 199, tryptophan 203–proline 223, threonine 281–alanine 301, isoleucine 348–leucine 368, leucine 383–methionine 403, alanine 429–isoleucine 449, and isoleucine 458–threonine 478.

It belongs to the major facilitator superfamily.

It localises to the membrane. The protein is Putative transporter SVOPL (SVOPL) of Homo sapiens (Human).